The sequence spans 162 residues: MPDENKQPLFQIQRVYLKGLSLEQPNSPAIFLEEQSPTLEVAVSTIAEQQADGIFESTVTVSVTAKIRDKVAFLVEAKQSGIFEIRHLPAEQLNPALGIGCPTILYPYLRANIADAITRAGFPPVHLSEINFQAFYLQQQKNKMATQPGQTAEEPAMALEQE.

Belongs to the SecB family. As to quaternary structure, homotetramer, a dimer of dimers. One homotetramer interacts with 1 SecA dimer.

It localises to the cytoplasm. Functionally, one of the proteins required for the normal export of preproteins out of the cell cytoplasm. It is a molecular chaperone that binds to a subset of precursor proteins, maintaining them in a translocation-competent state. It also specifically binds to its receptor SecA. This Polaromonas naphthalenivorans (strain CJ2) protein is Protein-export protein SecB 2.